The chain runs to 233 residues: Chaperone protein MrkB (233 aa).

The signal sequence occupies residues 1-18 (MKRIALFFCFIFSFAAHA).

The protein belongs to the periplasmic pilus chaperone family.

The protein localises to the periplasm. Functionally, mediates assembly of pili by forming soluble multimeric complexes with pili subunits as an intermediate step in the assembly process. This protein is involved in type 3 pili assembly. The protein is Chaperone protein MrkB (mrkB) of Klebsiella pneumoniae.